Reading from the N-terminus, the 60-residue chain is MNKLPILIFMLLVCSMFISSDCQKHTDIKCSSSSSCYEPCRGVTGRAHGKCMNGRCTCYY.

The N-terminal stretch at 1–22 (MNKLPILIFMLLVCSMFISSDC) is a signal peptide. 3 disulfides stabilise this stretch: cysteine 30/cysteine 51, cysteine 36/cysteine 56, and cysteine 40/cysteine 58.

The protein belongs to the short scorpion toxin superfamily. Potassium channel inhibitor family. Alpha-KTx 12 subfamily. In terms of tissue distribution, expressed by the venom gland.

The protein resides in the secreted. Functionally, this recombinant toxin inhibits the mammalian voltage-gated potassium channels Kv1.3/KCNA3 (IC(50)=28 nM). Kv1.1/KCNA1 and Kv1.2/KCNA2 potassium channels are also weakly inhibited (IC(50)=1.73 uM and IC(50)=12.63 uM, respectively). The protein is Potassium channel toxin alpha-KTx 12.5 of Lychas mucronatus (Chinese swimming scorpion).